Consider the following 640-residue polypeptide: 1,4-alpha-glucan branching enzyme GlgB (640 aa).

D318 (nucleophile) is an active-site residue. The Proton donor role is filled by E371.

Belongs to the glycosyl hydrolase 13 family. GlgB subfamily. As to quaternary structure, monomer.

It carries out the reaction Transfers a segment of a (1-&gt;4)-alpha-D-glucan chain to a primary hydroxy group in a similar glucan chain.. It functions in the pathway glycan biosynthesis; glycogen biosynthesis. Catalyzes the formation of the alpha-1,6-glucosidic linkages in glycogen by scission of a 1,4-alpha-linked oligosaccharide from growing alpha-1,4-glucan chains and the subsequent attachment of the oligosaccharide to the alpha-1,6 position. The polypeptide is 1,4-alpha-glucan branching enzyme GlgB (Francisella tularensis subsp. tularensis (strain FSC 198)).